The chain runs to 318 residues: L-lactate dehydrogenase (318 aa).

NAD(+) is bound by residues Val-16, Asp-37, and Tyr-68. Substrate contacts are provided by residues Gln-85, Arg-91, and 123–126 (NPVD). NAD(+) is bound by residues 121 to 123 (VAN) and Ser-146. 151–154 (DSAR) lines the substrate pocket. His-178 functions as the Proton acceptor in the catalytic mechanism. A Phosphotyrosine modification is found at Tyr-222. Thr-231 contributes to the substrate binding site.

The protein belongs to the LDH/MDH superfamily. LDH family. As to quaternary structure, homotetramer.

Its subcellular location is the cytoplasm. It carries out the reaction (S)-lactate + NAD(+) = pyruvate + NADH + H(+). It functions in the pathway fermentation; pyruvate fermentation to lactate; (S)-lactate from pyruvate: step 1/1. In terms of biological role, catalyzes the conversion of lactate to pyruvate. This chain is L-lactate dehydrogenase, found in Mycoplasma mobile (strain ATCC 43663 / 163K / NCTC 11711) (Mesomycoplasma mobile).